A 775-amino-acid polypeptide reads, in one-letter code: Glutamine--tRNA ligase (775 aa).

An N-acetylalanine modification is found at A2. S70 is subject to Phosphoserine. ATP is bound by residues 271–273 (EPN) and 277–283 (HIGHAKA). D303 is an L-glutamine binding site. K309 carries the post-translational modification N6-acetyllysine. Y438 is an L-glutamine binding site. Residues T457, 486 to 487 (RL), and 494 to 496 (VSK) contribute to the ATP site. At S495 the chain carries Phosphoserine.

The protein belongs to the class-I aminoacyl-tRNA synthetase family. As to quaternary structure, monomer. Part of a multisubunit complex that groups tRNA ligases for Arg (RARS1), Asp (DARS1), Gln (QARS1), Ile (IARS1), Leu (LARS1), Lys (KARS1), Met (MARS1) the bifunctional ligase for Glu and Pro (EPRS1) and the auxiliary subunits AIMP1/p43, AIMP2/p38 and EEF1E1/p18. Interacts with RARS1. Part of a complex composed of RARS1, QARS1 and AIMP1. Detected in dorsal root ganglia (at protein level). Detected in dorsal root ganglia.

The protein localises to the cytoplasm. It localises to the cytosol. The enzyme catalyses tRNA(Gln) + L-glutamine + ATP = L-glutaminyl-tRNA(Gln) + AMP + diphosphate. Its function is as follows. Glutamine--tRNA ligase. Plays a critical role in brain development. In Rattus norvegicus (Rat), this protein is Glutamine--tRNA ligase (Qars1).